A 120-amino-acid chain; its full sequence is Chaperonin GroEL (120 aa).

23–27 is a binding site for ATP; it reads DGTTT.

This sequence belongs to the chaperonin (HSP60) family. Forms a cylinder of 14 subunits composed of two heptameric rings stacked back-to-back. Interacts with the co-chaperonin GroES.

The protein resides in the cytoplasm. It carries out the reaction ATP + H2O + a folded polypeptide = ADP + phosphate + an unfolded polypeptide.. Functionally, together with its co-chaperonin GroES, plays an essential role in assisting protein folding. The GroEL-GroES system forms a nano-cage that allows encapsulation of the non-native substrate proteins and provides a physical environment optimized to promote and accelerate protein folding. The polypeptide is Chaperonin GroEL (Mycobacterium asiaticum).